We begin with the raw amino-acid sequence, 357 residues long: MALQIAKRLLRCRADSVASSVRFFDRTFTSESNSNLIRATLFPGDGIGPEIAESVRQIFKVAEVPIEWEEHYVGTEVDPRTNSFLTWESLESVRRNKVGLKGPMATPIGKGHRSLNLTLRKELNLYANVRPCYSLPGYKTRYDDVNLITIRENTEGEYSGLEHQVVRGVVESLKIITRQASLRVAEYAFHYAKTHGRERVSAIHKANIMQKTDGLFLKCCREVAEKYPEIKYEEVVIDNCCMMLVKNPALFDVLVMPNLYGDIISDLCAGLIGGLGLTPSCNIGEGGIALAEAVHGSAPDIAGKNLANPTALLLSSVSMLRHLELHDKADRIQDAILKTIAGGKVPNWRPWRHCYNN.

Residues 1 to 29 constitute a chloroplast transit peptide; sequence MALQIAKRLLRCRADSVASSVRFFDRTFT. Substrate-binding residues include Arg-120, Arg-130, Arg-151, and Asp-238. Mg(2+) contacts are provided by Asp-238, Asp-262, and Asp-266. An NAD(+)-binding site is contributed by 296-308; the sequence is GSAPDIAGKNLAN.

The protein belongs to the isocitrate and isopropylmalate dehydrogenases family. In terms of assembly, homodimer. It depends on Mg(2+) as a cofactor. Requires Mn(2+) as cofactor.

Its subcellular location is the plastid. The protein resides in the chloroplast. It catalyses the reaction (2R,3S)-3-isopropylmalate + NAD(+) = 4-methyl-2-oxopentanoate + CO2 + NADH. The protein operates within amino-acid biosynthesis; L-leucine biosynthesis; L-leucine from 3-methyl-2-oxobutanoate: step 3/4. Catalyzes the oxidation of 3-carboxy-2-hydroxy-4-methylpentanoate (3-isopropylmalate) to 3-carboxy-4-methyl-2-oxopentanoate. The product decarboxylates to 4-methyl-2 oxopentanoate. This chain is 3-isopropylmalate dehydrogenase, chloroplastic, found in Solanum tuberosum (Potato).